A 49-amino-acid polypeptide reads, in one-letter code: SPbeta prophage-derived uncharacterized protein YoqT (49 aa).

Residues 7–29 (CFVNWSFDKIMDYILIAGLYFVF) traverse the membrane as a helical segment.

It localises to the cell membrane. This is SPbeta prophage-derived uncharacterized protein YoqT (yoqT) from Bacillus subtilis (strain 168).